The chain runs to 135 residues: Retinol-binding protein 5 (135 aa).

Belongs to the calycin superfamily. Fatty-acid binding protein (FABP) family. In terms of tissue distribution, kidney.

The protein resides in the cytoplasm. Functionally, intracellular transport of retinol. In Bos taurus (Bovine), this protein is Retinol-binding protein 5 (RBP5).